The primary structure comprises 354 residues: MALTTPSGKLIPELQFKAHHFIDKTTVLYGPSKTGKTVYVKHIMKILQPHIEQILVVAPSEPSNRSYEGFVHPTLIHYRLWLADKQKKNDNKGAERFLEAIWQRQTMMSSIYSRVNNIDMLKTLYHKLPIDIQQKENKNIAKVECLKAEQTDQKKEEKITSLYQQLLKKIIIQNIHMYKNLSLTEDEKFTLNYINLNPRLLLILDDCAAELHPLFTKEIFKKFFYQNRHCFISMIICCQDDTDLPANLRKNAFVSIFTNASICMSNFSRQSNRYSKQDKEYVEEISHIVFKGYRKLVYIREDEYRQHFYHSTVPLPTAFSFGSKALLKLCKAVYSKEVVIDKSNPYWSKFRLNF.

This sequence belongs to the asfivirus B354L family.

This is an uncharacterized protein from Ornithodoros (relapsing fever ticks).